Here is a 192-residue protein sequence, read N- to C-terminus: Inosine triphosphate pyrophosphatase (192 aa).

8 to 13 is a binding site for ITP; that stretch reads TTNLKK. Glu-34 lines the Mg(2+) pocket. Residues Lys-46, 64-65, Lys-81, 141-144, Lys-164, and 169-170 each bind ITP; these read DT, EGFD, and HR.

Belongs to the HAM1 NTPase family. In terms of assembly, homodimer. Requires Mg(2+) as cofactor. Mn(2+) is required as a cofactor.

The protein localises to the cytoplasm. It is found in the nucleus. The catalysed reaction is ITP + H2O = IMP + diphosphate + H(+). It catalyses the reaction dITP + H2O = dIMP + diphosphate + H(+). It carries out the reaction XTP + H2O = XMP + diphosphate + H(+). Functionally, pyrophosphatase that hydrolyzes non-canonical purine nucleotides such as inosine triphosphate (ITP), deoxyinosine triphosphate (dITP) or xanthosine 5'-triphosphate (XTP) to their respective monophosphate derivatives. The enzyme does not distinguish between the deoxy- and ribose forms. Probably excludes non-canonical purines from RNA and DNA precursor pools, thus preventing their incorporation into RNA and DNA and avoiding chromosomal lesions. The polypeptide is Inosine triphosphate pyrophosphatase (Encephalitozoon cuniculi (strain GB-M1) (Microsporidian parasite)).